The chain runs to 133 residues: Fluoride-specific ion channel FluC (133 aa).

4 helical membrane passes run 3–23, 41–61, 76–96, and 103–123; these read AVVW…GSGL, WGTL…LIWV, IVGL…CLVF, and LIVG…VFLG. Residues Gly81 and Thr84 each contribute to the Na(+) site.

This sequence belongs to the fluoride channel Fluc/FEX (TC 1.A.43) family.

It localises to the cell inner membrane. It catalyses the reaction fluoride(in) = fluoride(out). Its activity is regulated as follows. Na(+) is not transported, but it plays an essential structural role and its presence is essential for fluoride channel function. Fluoride-specific ion channel. Important for reducing fluoride concentration in the cell, thus reducing its toxicity. The polypeptide is Fluoride-specific ion channel FluC (Xylella fastidiosa (strain M23)).